The primary structure comprises 971 residues: Serine/threonine-protein kinase CLA4 (971 aa).

A disordered region spans residues 1–40 (MTSIYTSDLKNHRRAPPPPNGAAGSGSGSGSGSGSGSGSL). Over residues 23 to 37 (AGSGSGSGSGSGSGS) the composition is skewed to gly residues. In terms of domain architecture, PH spans 67–178 (SKRQSGWVHV…WLDAFTTKCP (112 aa)). Residues 201 to 221 (LTNGSLNGNSSSSPTSGLLSS) form a disordered region. Residues 231–244 (VSGPINFTHKVHVG) form the CRIB domain. Disordered stretches follow at residues 292–517 (GGNS…KIHP) and 554–653 (SKKS…QLKK). Composition is skewed to low complexity over residues 307-326 (NSKT…TKNN) and 365-404 (LNGS…PLNN). Residues 423 to 433 (SGTSSDTYSNK) are compositionally biased toward polar residues. Residues 434–448 (NHQDRSGYEQQRQQR) are compositionally biased toward basic and acidic residues. The span at 449–482 (TDSSQQQQQQKQHQYQQKSQQQQQQPQQPLSSHQ) shows a compositional bias: low complexity. A compositionally biased stretch (pro residues) spans 491-500 (QVPPTLPSSG). A compositionally biased stretch (low complexity) spans 554 to 578 (SKKSQQQLASKQPSPPSSQQQQQKP). Residues 617–630 (NETSGVSKTPSPTD) show a composition bias toward polar residues. Positions 680–935 (FRIVEKAGQG…TDELLEHSFI (256 aa)) constitute a Protein kinase domain. Residues 686 to 694 (AGQGASGNV) and lysine 710 each bind ATP. Catalysis depends on aspartate 803, which acts as the Proton acceptor.

Belongs to the protein kinase superfamily. STE Ser/Thr protein kinase family. STE20 subfamily.

It catalyses the reaction L-seryl-[protein] + ATP = O-phospho-L-seryl-[protein] + ADP + H(+). It carries out the reaction L-threonyl-[protein] + ATP = O-phospho-L-threonyl-[protein] + ADP + H(+). Its function is as follows. Essential for virulence and morphological switching (hyphal formation) of C.albicans. This chain is Serine/threonine-protein kinase CLA4 (CLA4), found in Candida albicans (Yeast).